A 248-amino-acid polypeptide reads, in one-letter code: Probable transcriptional regulatory protein blr1534 (248 aa).

The disordered stretch occupies residues 1–21 (MAGHSQFKNIMHRKGRQDAQK).

This sequence belongs to the TACO1 family.

It localises to the cytoplasm. The sequence is that of Probable transcriptional regulatory protein blr1534 from Bradyrhizobium diazoefficiens (strain JCM 10833 / BCRC 13528 / IAM 13628 / NBRC 14792 / USDA 110).